A 167-amino-acid polypeptide reads, in one-letter code: ATP synthase subunit b (167 aa).

Residues 15–37 traverse the membrane as a helical segment; sequence FWQTVIFLVTLYLLSKFAWGPIM.

The protein belongs to the ATPase B chain family. F-type ATPases have 2 components, F(1) - the catalytic core - and F(0) - the membrane proton channel. F(1) has five subunits: alpha(3), beta(3), gamma(1), delta(1), epsilon(1). F(0) has three main subunits: a(1), b(2) and c(10-14). The alpha and beta chains form an alternating ring which encloses part of the gamma chain. F(1) is attached to F(0) by a central stalk formed by the gamma and epsilon chains, while a peripheral stalk is formed by the delta and b chains.

It is found in the cell inner membrane. In terms of biological role, f(1)F(0) ATP synthase produces ATP from ADP in the presence of a proton or sodium gradient. F-type ATPases consist of two structural domains, F(1) containing the extramembraneous catalytic core and F(0) containing the membrane proton channel, linked together by a central stalk and a peripheral stalk. During catalysis, ATP synthesis in the catalytic domain of F(1) is coupled via a rotary mechanism of the central stalk subunits to proton translocation. Its function is as follows. Component of the F(0) channel, it forms part of the peripheral stalk, linking F(1) to F(0). In Cytophaga hutchinsonii (strain ATCC 33406 / DSM 1761 / CIP 103989 / NBRC 15051 / NCIMB 9469 / D465), this protein is ATP synthase subunit b.